The primary structure comprises 146 residues: MARNVLYPLYQLGGPQLRVFRTNFFIQLVRPGTAQPEDTVQFRIPMEMTRVDLRNYLEQIYNVPVAAVRTRVQHGSNRRRDHKNVRIKKPDYKVAYVQLAHGQTFTFPDLFPEKEPTSPDPLEEELPQQRQSSDPRCPGIPSWFGL.

Residues 108–146 (PDLFPEKEPTSPDPLEEELPQQRQSSDPRCPGIPSWFGL) form a disordered region.

The protein belongs to the universal ribosomal protein uL23 family. Component of the mitochondrial ribosome large subunit (39S) which comprises a 16S rRNA and about 50 distinct proteins.

It is found in the mitochondrion. The protein is Large ribosomal subunit protein uL23m (Mrpl23) of Rattus norvegicus (Rat).